Consider the following 91-residue polypeptide: Non-structural protein 3a (91 aa).

Positions 1–19 are cleaved as a signal peptide; it reads MVSFNATAILLVLVANAFS.

The sequence is that of Non-structural protein 3a from Tylonycteris pachypus (Lesser bamboo bat).